The primary structure comprises 660 residues: Bifunctional polymyxin resistance protein ArnA (660 aa).

A formyltransferase ArnAFT region spans residues 1-304 (MKAIVFAYHD…EMGIVTDVRV (304 aa)). His-104 acts as the Proton donor; for formyltransferase activity in catalysis. (6R)-10-formyltetrahydrofolate-binding positions include Arg-114 and 136–140 (TAKAD). The interval 314 to 660 (RRQRVLILGV…RGAVEELGNK (347 aa)) is dehydrogenase ArnADH. Residues Asp-347 and 368-369 (DV) contribute to the NAD(+) site. UDP-alpha-D-glucuronate-binding positions include Ala-393, Tyr-398, and 432–433 (TS). Glu-434 functions as the Proton acceptor; for decarboxylase activity in the catalytic mechanism. UDP-alpha-D-glucuronate contacts are provided by residues Arg-460, Asn-492, 526-535 (KLVDGGEQKR), and Tyr-613. The active-site Proton donor; for decarboxylase activity is Arg-619.

The protein in the N-terminal section; belongs to the Fmt family. UDP-L-Ara4N formyltransferase subfamily. This sequence in the C-terminal section; belongs to the NAD(P)-dependent epimerase/dehydratase family. UDP-glucuronic acid decarboxylase subfamily. Homohexamer, formed by a dimer of trimers.

It carries out the reaction UDP-alpha-D-glucuronate + NAD(+) = UDP-beta-L-threo-pentopyranos-4-ulose + CO2 + NADH. It catalyses the reaction UDP-4-amino-4-deoxy-beta-L-arabinose + (6R)-10-formyltetrahydrofolate = UDP-4-deoxy-4-formamido-beta-L-arabinose + (6S)-5,6,7,8-tetrahydrofolate + H(+). It participates in nucleotide-sugar biosynthesis; UDP-4-deoxy-4-formamido-beta-L-arabinose biosynthesis; UDP-4-deoxy-4-formamido-beta-L-arabinose from UDP-alpha-D-glucuronate: step 1/3. Its pathway is nucleotide-sugar biosynthesis; UDP-4-deoxy-4-formamido-beta-L-arabinose biosynthesis; UDP-4-deoxy-4-formamido-beta-L-arabinose from UDP-alpha-D-glucuronate: step 3/3. The protein operates within bacterial outer membrane biogenesis; lipopolysaccharide biosynthesis. Its function is as follows. Bifunctional enzyme that catalyzes the oxidative decarboxylation of UDP-glucuronic acid (UDP-GlcUA) to UDP-4-keto-arabinose (UDP-Ara4O) and the addition of a formyl group to UDP-4-amino-4-deoxy-L-arabinose (UDP-L-Ara4N) to form UDP-L-4-formamido-arabinose (UDP-L-Ara4FN). The modified arabinose is attached to lipid A and is required for resistance to polymyxin and cationic antimicrobial peptides. The polypeptide is Bifunctional polymyxin resistance protein ArnA (Proteus mirabilis (strain HI4320)).